A 466-amino-acid chain; its full sequence is Amino acid permease 4 (466 aa).

The Cytoplasmic portion of the chain corresponds to Met-1–Thr-22. Transmembrane regions (helical) follow at residues Val-23 to Ala-43 and Trp-44 to Val-64. The Cytoplasmic portion of the chain corresponds to Thr-65 to Tyr-111. Residues Leu-112–Ile-132 form a helical membrane-spanning segment. Residues Lys-133–Leu-177 lie on the Extracellular side of the membrane. A helical transmembrane segment spans residues Ser-178 to Ile-198. The Cytoplasmic segment spans residues Gln-199–Arg-226. A helical transmembrane segment spans residues Thr-227 to Ile-247. At Gln-248–Arg-266 the chain is on the extracellular side. A helical membrane pass occupies residues Ile-267–Phe-287. The Cytoplasmic segment spans residues Gly-288–Lys-290. Residues Ala-291 to Ala-311 form a helical membrane-spanning segment. The Extracellular segment spans residues Asn-312–Ala-313. The helical transmembrane segment at Ala-314 to Ile-334 threads the bilayer. Over Glu-335–Arg-369 the chain is Cytoplasmic. The helical transmembrane segment at Ala-370 to Phe-390 threads the bilayer. Topologically, residues Asn-391–Asp-392 are extracellular. A helical transmembrane segment spans residues Val-393–Met-413. At Tyr-414 to Cys-435 the chain is on the cytoplasmic side. The chain crosses the membrane as a helical span at residues Gly-436–Leu-456. Over Lys-457–Tyr-466 the chain is Extracellular.

This sequence belongs to the amino acid/polyamine transporter 2 family. Amino acid/auxin permease (AAAP) (TC 2.A.18.2) subfamily. Expressed in leaves, stems and flowers.

Its subcellular location is the cell membrane. Inhibited by 2,4-dinitrophenol. Its function is as follows. Amino acid-proton symporter. Stereospecific transporter with a broad specificity for neutral amino acids, favoring small amino acids such as alanine, asparagine and glutamine. Also accepts large aromatic residues such as in phenlalanine or tyrosine. The sequence is that of Amino acid permease 4 (AAP4) from Arabidopsis thaliana (Mouse-ear cress).